A 393-amino-acid polypeptide reads, in one-letter code: Probable protein phosphatase 2C 68 (393 aa).

In terms of domain architecture, PPM-type phosphatase spans 56–359 (DFSIAVVQAN…DDITVVVIFI (304 aa)). Residues Asp-87, Gly-88, Asp-291, and Asp-350 each contribute to the Mn(2+) site.

This sequence belongs to the PP2C family. The cofactor is Mg(2+). Mn(2+) is required as a cofactor.

The catalysed reaction is O-phospho-L-seryl-[protein] + H2O = L-seryl-[protein] + phosphate. It catalyses the reaction O-phospho-L-threonyl-[protein] + H2O = L-threonyl-[protein] + phosphate. Functionally, may dephosphorylate and repress plasma membrane H(+)-ATPases (PM H(+)-ATPases, e.g. AHA1 and AHA2), thus influencing negatively plant growth and fitness. The chain is Probable protein phosphatase 2C 68 from Arabidopsis thaliana (Mouse-ear cress).